The sequence spans 451 residues: ATNRDQESSGFAWWAGNARLINLSGKLLGAHVAHAGLIVFWAGAMTLFELAHFIPEKPMYEQGLILIPHIATLGWGVGPGGEVVDTFPFFVVGVVHLISSAVLGFGGVYHAIRGPETLEEYSSFFGYDWKDKNKMTTILGFHLIVLGIGALLLVAKAMFFGGLYDTWAPGGGDVRVITNPTLDPRVIFGYLLKSPFGGEGWIVSVNNLEDVVGGHIWIGLICIAGGIWHILTTPFGWARRAFIWSGEAYLSYSLGALSMMGFIATCFVWFNNTVYPSEFYGPTGPEASQAQAMTFLIRDQKLGANVGSAQGPTGLGKYLMRSPTGEIIFGGETMRFWDFRGPWLEPLRGPNGLDLNKIKNDIQPWQERRAAEYMTHAPLGSLNSVGGVATEINSVNFVSPRSWLATSHFVLAFFFLVGHLWHAGRARAAAAGFEKGIDRESEPVLSMPSLD.

Residues Ala-1–Thr-46 are Cytoplasmic-facing. Positions 13, 27, and 30 each coordinate chlorophyll a. The helical transmembrane segment at Leu-47 to Ala-71 threads the bilayer. Topologically, residues Thr-72–Ala-111 are lumenal. Chlorophyll a-binding residues include Val-92 and Gly-106. The helical transmembrane segment at Ile-112 to Asn-133 threads the bilayer. Over Lys-134 to Ala-155 the chain is Cytoplasmic. Chlorophyll a is bound at residue Ile-138. Residues Lys-156–Thr-178 form a helical membrane-spanning segment. Topologically, residues Asn-179–Thr-232 are lumenal. Val-211 and Gly-225 together coordinate chlorophyll a. The chain crosses the membrane as a helical span at residues Thr-233 to Ser-253. The Cytoplasmic portion of the chain corresponds to Leu-254–Val-268. A helical transmembrane segment spans residues Trp-269–Ala-290. The Lumenal segment spans residues Gln-291–Gly-424. Glu-345 is a binding site for [CaMn4O5] cluster. Leu-404, Phe-415, and Gly-418 together coordinate chlorophyll a. Residues Arg-425 to Ser-449 traverse the membrane as a helical segment. The Cytoplasmic segment spans residues Leu-450 to Asp-451.

The protein belongs to the PsbB/PsbC family. PsbC subfamily. PSII is composed of 1 copy each of membrane proteins PsbA, PsbB, PsbC, PsbD, PsbE, PsbF, PsbH, PsbI, PsbJ, PsbK, PsbL, PsbM, PsbT, PsbX, PsbY, PsbZ, Psb30/Ycf12, peripheral proteins PsbO, CyanoQ (PsbQ), PsbU, PsbV and a large number of cofactors. It forms dimeric complexes. Binds multiple chlorophylls and provides some of the ligands for the Ca-4Mn-5O cluster of the oxygen-evolving complex. It may also provide a ligand for a Cl- that is required for oxygen evolution. PSII binds additional chlorophylls, carotenoids and specific lipids. is required as a cofactor.

It localises to the cellular thylakoid membrane. In terms of biological role, one of the components of the core complex of photosystem II (PSII). It binds chlorophyll and helps catalyze the primary light-induced photochemical processes of PSII. PSII is a light-driven water:plastoquinone oxidoreductase, using light energy to abstract electrons from H(2)O, generating O(2) and a proton gradient subsequently used for ATP formation. The sequence is that of Photosystem II CP43 reaction center protein from Thermostichus vulcanus (Synechococcus vulcanus).